The chain runs to 127 residues: Small ribosomal subunit protein uS13 (127 aa).

The interval 100–127 (GQRTRTNARTRKGVRKTVAGKKKAPAKK) is disordered. A compositionally biased stretch (basic residues) spans 101–127 (QRTRTNARTRKGVRKTVAGKKKAPAKK).

It belongs to the universal ribosomal protein uS13 family. In terms of assembly, part of the 30S ribosomal subunit. Forms a loose heterodimer with protein S19. Forms two bridges to the 50S subunit in the 70S ribosome.

In terms of biological role, located at the top of the head of the 30S subunit, it contacts several helices of the 16S rRNA. In the 70S ribosome it contacts the 23S rRNA (bridge B1a) and protein L5 of the 50S subunit (bridge B1b), connecting the 2 subunits; these bridges are implicated in subunit movement. Contacts the tRNAs in the A and P-sites. The sequence is that of Small ribosomal subunit protein uS13 from Synechococcus sp. (strain JA-3-3Ab) (Cyanobacteria bacterium Yellowstone A-Prime).